The sequence spans 238 residues: Phosphoribosylaminoimidazole-succinocarboxamide synthase (238 aa).

This sequence belongs to the SAICAR synthetase family.

The catalysed reaction is 5-amino-1-(5-phospho-D-ribosyl)imidazole-4-carboxylate + L-aspartate + ATP = (2S)-2-[5-amino-1-(5-phospho-beta-D-ribosyl)imidazole-4-carboxamido]succinate + ADP + phosphate + 2 H(+). It participates in purine metabolism; IMP biosynthesis via de novo pathway; 5-amino-1-(5-phospho-D-ribosyl)imidazole-4-carboxamide from 5-amino-1-(5-phospho-D-ribosyl)imidazole-4-carboxylate: step 1/2. This is Phosphoribosylaminoimidazole-succinocarboxamide synthase from Desulfitobacterium hafniense (strain DSM 10664 / DCB-2).